We begin with the raw amino-acid sequence, 143 residues long: Large ribosomal subunit protein uL11 (143 aa).

This sequence belongs to the universal ribosomal protein uL11 family. Part of the ribosomal stalk of the 50S ribosomal subunit. Interacts with L10 and the large rRNA to form the base of the stalk. L10 forms an elongated spine to which L12 dimers bind in a sequential fashion forming a multimeric L10(L12)X complex. One or more lysine residues are methylated.

Functionally, forms part of the ribosomal stalk which helps the ribosome interact with GTP-bound translation factors. The sequence is that of Large ribosomal subunit protein uL11 from Ralstonia nicotianae (strain ATCC BAA-1114 / GMI1000) (Ralstonia solanacearum).